Reading from the N-terminus, the 121-residue chain is Small ribosomal subunit protein uS13 (121 aa).

The segment at 92–121 (RKGLPVRGQSSKTNARTVKGPRKTVANKKK) is disordered. The span at 110 to 121 (KGPRKTVANKKK) shows a compositional bias: basic residues.

Belongs to the universal ribosomal protein uS13 family. In terms of assembly, part of the 30S ribosomal subunit. Forms a loose heterodimer with protein S19. Forms two bridges to the 50S subunit in the 70S ribosome.

In terms of biological role, located at the top of the head of the 30S subunit, it contacts several helices of the 16S rRNA. In the 70S ribosome it contacts the 23S rRNA (bridge B1a) and protein L5 of the 50S subunit (bridge B1b), connecting the 2 subunits; these bridges are implicated in subunit movement. Contacts the tRNAs in the A and P-sites. This is Small ribosomal subunit protein uS13 from Mycoplasma capricolum subsp. capricolum (strain California kid / ATCC 27343 / NCTC 10154).